Consider the following 313-residue polypeptide: LOB domain-containing protein 36 (313 aa).

The 102-residue stretch at 6-107 (SPCAACKFLR…HDLENAKKEL (102 aa)) folds into the LOB domain. Residues 245 to 313 (GNFVDSPSTN…SEEGRRNVIG (69 aa)) are disordered. Positions 249–260 (DSPSTNNNYHTD) are enriched in polar residues. Low complexity predominate over residues 280 to 302 (PSQSSQPLPLQTQETQTQTQPNS).

The protein belongs to the LOB domain-containing protein family. Expressed in trichomes, at the base of many lateral organs, including branching points of the inflorescence and floral organs and in the distal part of the pistil at stages when style and stigma start to develop. Also detected in pedicels and at the base of petals and sepals.

Controls the proximal-distal patterning in petals and the adaxial-abaxial determination of leaves. Involved in the repression of the homeobox gene BP. The chain is LOB domain-containing protein 36 (LBD36) from Arabidopsis thaliana (Mouse-ear cress).